Consider the following 171-residue polypeptide: 16S rRNA aminocarboxypropyltransferase (171 aa).

The S-adenosyl-L-methionine site is built by Thr18, Leu68, Leu91, and Ser110.

This sequence belongs to the TDD superfamily. TSR3 family.

It is found in the cytoplasm. It carries out the reaction an N(1)-methylpseudouridine in rRNA + S-adenosyl-L-methionine = N(1)-methyl-N(3)-[(3S)-3-amino-3-carboxypropyl]pseudouridine in rRNA + S-methyl-5'-thioadenosine + H(+). Functionally, aminocarboxypropyltransferase that catalyzes the aminocarboxypropyl transfer on pseudouridine corresponding to position 914 in M.jannaschii 16S rRNA. It constitutes the last step in biosynthesis of the hypermodified N1-methyl-N3-(3-amino-3-carboxypropyl) pseudouridine (m1acp3-Psi). This is 16S rRNA aminocarboxypropyltransferase from Methanosphaera stadtmanae (strain ATCC 43021 / DSM 3091 / JCM 11832 / MCB-3).